The following is a 23-amino-acid chain: Pseudin-4 (23 aa).

In terms of tissue distribution, expressed by the skin glands.

Its subcellular location is the secreted. Its function is as follows. Possesses antifungal activity against C.albicans and is also active against E.coli and S.aureus. This Pseudis paradoxa (Paradoxical frog) protein is Pseudin-4.